Consider the following 143-residue polypeptide: Transcriptional regulator MraZ (143 aa).

SpoVT-AbrB domains lie at 5 to 47 (EYFH…PVSA) and 76 to 119 (ASNQ…DKEK).

It belongs to the MraZ family. As to quaternary structure, forms oligomers.

The protein localises to the cytoplasm. It localises to the nucleoid. In Finegoldia magna (strain ATCC 29328 / DSM 20472 / WAL 2508) (Peptostreptococcus magnus), this protein is Transcriptional regulator MraZ.